Here is a 154-residue protein sequence, read N- to C-terminus: Myoglobin (154 aa).

The Globin domain occupies 2 to 148 (GLSDGEWQLV…FRNDIAAKYK (147 aa)). Phosphoserine is present on Ser4. Nitrite is bound at residue His65. His65 serves as a coordination point for O2. A Phosphothreonine modification is found at Thr68. Heme b is bound at residue His94.

This sequence belongs to the globin family. Monomeric.

The protein resides in the cytoplasm. Its subcellular location is the sarcoplasm. The enzyme catalyses Fe(III)-heme b-[protein] + nitric oxide + H2O = Fe(II)-heme b-[protein] + nitrite + 2 H(+). It catalyses the reaction H2O2 + AH2 = A + 2 H2O. Monomeric heme protein which primary function is to store oxygen and facilitate its diffusion within muscle tissues. Reversibly binds oxygen through a pentacoordinated heme iron and enables its timely and efficient release as needed during periods of heightened demand. Depending on the oxidative conditions of tissues and cells, and in addition to its ability to bind oxygen, it also has a nitrite reductase activity whereby it regulates the production of bioactive nitric oxide. Under stress conditions, like hypoxia and anoxia, it also protects cells against reactive oxygen species thanks to its pseudoperoxidase activity. The polypeptide is Myoglobin (MB) (Tupaia glis (Common tree shrew)).